The following is a 530-amino-acid chain: Phosphoenolpyruvate carboxykinase (ATP) (530 aa).

The substrate site is built by R57, Y193, and K199. ATP contacts are provided by residues K199, H218, and 234-242; that span reads GLSGTGKTT. The Mn(2+) site is built by K199 and H218. Position 255 (D255) interacts with Mn(2+). 3 residues coordinate ATP: E283, R320, and T445. Substrate is bound at residue R320.

This sequence belongs to the phosphoenolpyruvate carboxykinase (ATP) family. Mn(2+) serves as cofactor.

Its subcellular location is the cytoplasm. The catalysed reaction is oxaloacetate + ATP = phosphoenolpyruvate + ADP + CO2. The protein operates within carbohydrate biosynthesis; gluconeogenesis. Involved in the gluconeogenesis. Catalyzes the conversion of oxaloacetate (OAA) to phosphoenolpyruvate (PEP) through direct phosphoryl transfer between the nucleoside triphosphate and OAA. This Leptospira biflexa serovar Patoc (strain Patoc 1 / Ames) protein is Phosphoenolpyruvate carboxykinase (ATP).